Consider the following 157-residue polypeptide: Transcription elongation factor GreA (157 aa).

Belongs to the GreA/GreB family.

Functionally, necessary for efficient RNA polymerase transcription elongation past template-encoded arresting sites. The arresting sites in DNA have the property of trapping a certain fraction of elongating RNA polymerases that pass through, resulting in locked ternary complexes. Cleavage of the nascent transcript by cleavage factors such as GreA or GreB allows the resumption of elongation from the new 3'terminus. GreA releases sequences of 2 to 3 nucleotides. The protein is Transcription elongation factor GreA of Caulobacter sp. (strain K31).